The following is a 142-amino-acid chain: Gonadotropin subunit beta-2 (142 aa).

Positions 1 to 23 (MLGLHVGTLISLFLCILLEPVEG) are cleaved as a signal peptide. 6 cysteine pairs are disulfide-bonded: Cys29–Cys77, Cys43–Cys92, Cys46–Cys130, Cys54–Cys108, Cys58–Cys110, and Cys113–Cys120. Asn33 carries N-linked (GlcNAc...) asparagine glycosylation.

The protein belongs to the glycoprotein hormones subunit beta family. As to quaternary structure, heterodimer of an alpha and a beta chain.

It is found in the secreted. Its function is as follows. Involved in gametogenesis and steroidogenesis. In Oncorhynchus keta (Chum salmon), this protein is Gonadotropin subunit beta-2 (cgbb).